The sequence spans 426 residues: Egl nine homolog 1 (426 aa).

Ala-2 is subject to N-acetylalanine. Positions 6 to 20 (GGPGGPSPSERDRQY) are required for nuclear export. At Ser-12 the chain carries Phosphoserine. Positions 21, 24, 33, 36, 42, 46, 54, and 58 each coordinate Zn(2+). The MYND-type; atypical zinc-finger motif lies at 21–58 (CELCGKMENLLRCSRCRSSFYCCKEHQRQDWKKHKLVC). Disordered regions lie at residues 65 to 129 (LGHG…PCRA) and 160 to 184 (ANLY…PNGQ). A compositionally biased stretch (pro residues) spans 77–87 (PAPPAAVPPPR). Residues 89–103 (GAREPRKAAARRDNA) show a composition bias toward basic and acidic residues. Positions 120–129 (PAAAASPCRA) are enriched in low complexity. The residue at position 125 (Ser-125) is a Phosphoserine. S-nitrosocysteine is present on residues Cys-201 and Cys-208. A beta(2)beta(3) 'finger-like' loop region spans residues 241 to 251 (VSQKSDSSKDI). Positions 291–392 (KINGRTKAMV…RYAITVWYFD (102 aa)) constitute a Fe2OG dioxygenase domain. Residue Cys-302 is modified to S-nitrosocysteine. Residues His-313 and Asp-315 each coordinate Fe cation. Residues Cys-323 and Cys-326 each carry the S-nitrosocysteine modification. A Fe cation-binding site is contributed by His-374. A 2-oxoglutarate-binding site is contributed by Arg-383.

In terms of assembly, monomer. Interacts with ING4; the interaction inhibits the hydroxylation of HIF alpha proteins. Interacts with PTGES3 (via PXLE motif); thereby recruiting EGLN1 to the HSP90 pathway to facilitate HIF alpha proteins hydroxylation. Interacts with LIMD1. Found in a complex composed of LIMD1, VHL, EGLN1/PHD2, ELOB and CUL2. Interacts with EPAS1. Interacts with CBFA2T3. Interacts with HIF1A. The cofactor is Fe(2+). Requires L-ascorbate as cofactor. S-nitrosylation inhibits the enzyme activity up to 60% under aerobic conditions. Chelation of Fe(2+) has no effect on the S-nitrosylation. It is uncertain whether nitrosylation occurs on Cys-323 or Cys-326. As to expression, according to PubMed:11056053, widely expressed with highest levels in skeletal muscle and heart, moderate levels in pancreas, brain (dopaminergic neurons of adult and fetal substantia nigra) and kidney, and lower levels in lung and liver. According to PubMed:12351678 widely expressed with highest levels in brain, kidney and adrenal gland. Expressed in cardiac myocytes, aortic endothelial cells and coronary artery smooth muscle. According to PubMed:12788921; expressed in adult and fetal heart, brain, liver, lung, skeletal muscle and kidney. Also expressed in placenta. Highest levels in adult heart, brain, lung and liver and fetal brain, heart spleen and skeletal muscle.

The protein localises to the cytoplasm. Its subcellular location is the nucleus. The enzyme catalyses L-prolyl-[hypoxia-inducible factor alpha subunit] + 2-oxoglutarate + O2 = trans-4-hydroxy-L-prolyl-[hypoxia-inducible factor alpha subunit] + succinate + CO2. With respect to regulation, following exposure to hypoxia, activated in HeLa cells but not in cardiovascular cells. Cellular oxygen sensor that catalyzes, under normoxic conditions, the post-translational formation of 4-hydroxyproline in hypoxia-inducible factor (HIF) alpha proteins. Hydroxylates a specific proline found in each of the oxygen-dependent degradation (ODD) domains (N-terminal, NODD, and C-terminal, CODD) of HIF1A. Also hydroxylates HIF2A. Has a preference for the CODD site for both HIF1A and HIF1B. Hydroxylated HIFs are then targeted for proteasomal degradation via the von Hippel-Lindau ubiquitination complex. Under hypoxic conditions, the hydroxylation reaction is attenuated allowing HIFs to escape degradation resulting in their translocation to the nucleus, heterodimerization with HIF1B, and increased expression of hypoxy-inducible genes. EGLN1 is the most important isozyme under normoxia and, through regulating the stability of HIF1, involved in various hypoxia-influenced processes such as angiogenesis in retinal and cardiac functionality. Target proteins are preferentially recognized via a LXXLAP motif. The chain is Egl nine homolog 1 from Homo sapiens (Human).